A 152-amino-acid polypeptide reads, in one-letter code: Transcriptional regulator MraZ (152 aa).

SpoVT-AbrB domains follow at residues 5–52 and 81–124; these read ATLV…PLPE and ASEC…DETT.

This sequence belongs to the MraZ family. As to quaternary structure, forms oligomers.

It localises to the cytoplasm. The protein resides in the nucleoid. Negatively regulates its own expression and that of the subsequent genes in the proximal part of the division and cell wall (dcw) gene cluster. Acts by binding directly to DNA. May also regulate the expression of genes outside the dcw cluster. The polypeptide is Transcriptional regulator MraZ (Klebsiella pneumoniae subsp. pneumoniae (strain ATCC 700721 / MGH 78578)).